Consider the following 160-residue polypeptide: Cytochrome c-type biogenesis protein CcmE (160 aa).

The Cytoplasmic portion of the chain corresponds to 1–7 (MTRKQRR). A helical; Signal-anchor for type II membrane protein membrane pass occupies residues 8–28 (LFMIFGALGTLGVAVGLILFA). The Periplasmic segment spans residues 29–160 (LSDNIVFFYG…TQGAAAPLIR (132 aa)). Heme contacts are provided by His122 and Tyr126. The segment at 140–160 (VWQEDGQAKPATQGAAAPLIR) is disordered.

Belongs to the CcmE/CycJ family.

Its subcellular location is the cell inner membrane. In terms of biological role, heme chaperone required for the biogenesis of c-type cytochromes. Transiently binds heme delivered by CcmC and transfers the heme to apo-cytochromes in a process facilitated by CcmF and CcmH. The sequence is that of Cytochrome c-type biogenesis protein CcmE from Beijerinckia indica subsp. indica (strain ATCC 9039 / DSM 1715 / NCIMB 8712).